The primary structure comprises 91 residues: Putative ribonuclease inhibitor YrdF (91 aa).

It belongs to the barstar family.

It localises to the cytoplasm. In Bacillus subtilis (strain 168), this protein is Putative ribonuclease inhibitor YrdF (yrdF).